The sequence spans 319 residues: MIFYTLEHILTHISFSLVSIGITIFLITLSVDEIIGLYDSSEKGVIGTFLCITGLLVTRWAYSGHFPLSNLYESLLFLSWSFAIIHMFPYLKKQKSYVRTITSSSTIFTQGLVTSGLLSEMQQSEILVPALQSQWLMMHVSMMVLGYAALLCGSLLSVALLVITFRKALKIFSKKKAFLKDSFSFVEIQYRNEPSNVLLSTSFISSKNYYRAQLIQQLDRWSSRIISLGFIFLTIGILSGAVWANEAWGSYWNWDPKETWAFITWTMFAIYLHTRTNPNFQSVNSAIVAFLGFIIIWICYFGVNLLGIGLHSYGSFNLH.

The next 7 helical transmembrane spans lie at 9 to 29, 44 to 64, 71 to 91, 143 to 163, 225 to 245, 259 to 273, and 286 to 306; these read ILTH…LITL, GVIG…AYSG, LYES…FPYL, MVLG…LLVI, IISL…VWAN, TWAF…IYLH, and AIVA…VNLL.

It belongs to the CcmF/CycK/Ccl1/NrfE/CcsA family. In terms of assembly, may interact with Ccs1.

The protein localises to the plastid. It is found in the chloroplast thylakoid membrane. Required during biogenesis of c-type cytochromes (cytochrome c6 and cytochrome f) at the step of heme attachment. The polypeptide is Cytochrome c biogenesis protein CcsA (Oenothera argillicola (Appalachian evening primrose)).